A 294-amino-acid chain; its full sequence is Ribosomal RNA small subunit methyltransferase A (294 aa).

Positions 29, 31, 56, 77, 107, and 126 each coordinate S-adenosyl-L-methionine.

This sequence belongs to the class I-like SAM-binding methyltransferase superfamily. rRNA adenine N(6)-methyltransferase family. RsmA subfamily.

The protein localises to the cytoplasm. The catalysed reaction is adenosine(1518)/adenosine(1519) in 16S rRNA + 4 S-adenosyl-L-methionine = N(6)-dimethyladenosine(1518)/N(6)-dimethyladenosine(1519) in 16S rRNA + 4 S-adenosyl-L-homocysteine + 4 H(+). Its function is as follows. Specifically dimethylates two adjacent adenosines (A1518 and A1519) in the loop of a conserved hairpin near the 3'-end of 16S rRNA in the 30S particle. May play a critical role in biogenesis of 30S subunits. In Mycobacterium sp. (strain JLS), this protein is Ribosomal RNA small subunit methyltransferase A.